Consider the following 322-residue polypeptide: Cytochrome c biogenesis protein CcsA (322 aa).

7 consecutive transmembrane segments (helical) span residues 9–29 (ILTHISFSTISIVITIHLITL), 44–64 (GMIVTFFSITGFLVSRWVSSG), 68–88 (LSNLYESLIFLSWALYILHTI), 143–163 (MLLSYATLLCGSLLSAAILII), 226–246 (IISLGFTLLTIGILCGAVWAN), 260–274 (TWAFITWTIFAIYLH), and 289–309 (IASIGFLIIWICYFGINLLGI).

The protein belongs to the CcmF/CycK/Ccl1/NrfE/CcsA family. May interact with Ccs1.

It is found in the plastid. It localises to the chloroplast thylakoid membrane. In terms of biological role, required during biogenesis of c-type cytochromes (cytochrome c6 and cytochrome f) at the step of heme attachment. In Hordeum vulgare (Barley), this protein is Cytochrome c biogenesis protein CcsA.